A 382-amino-acid polypeptide reads, in one-letter code: uncharacterized protein (382 aa).

A run of 12 helical transmembrane segments spans residues V8–L28, M45–I65, Y75–W95, F102–S122, L131–S151, L157–F177, L204–P224, G231–G251, V270–P290, A291–C311, A325–M345, and S349–L369.

It belongs to the major facilitator superfamily. YcaD (TC 2.A.1.26) family.

Its subcellular location is the cell inner membrane. This is an uncharacterized protein from Salmonella paratyphi B (strain ATCC BAA-1250 / SPB7).